We begin with the raw amino-acid sequence, 331 residues long: uncharacterized protein (331 aa).

Disordered regions lie at residues 131-163 (ISHA…KKRS) and 190-209 (DEQK…VQSS). Residues 140 to 162 (RPKPTKPRASRKRAAIAQSKKKR) show a composition bias toward basic residues. Over residues 195–209 (RQSTSQPDKEIVQSS) the composition is skewed to polar residues.

This is an uncharacterized protein from Caenorhabditis elegans.